The following is a 183-amino-acid chain: MDPSQNPNIVHATTIISVRRGGHVAVAGDGQVTLGHTVMKGNARKVRRLGREGQVLAGFAGAAADAFTLFELFEAKLDKHGQLTRAAVELAKDWRTERRLGKLEALLAVADKETSLIISGTGDVIEPEDGIIAIGSGGAYALSAARALLAHTELDAKTIATEAINIAGDICIYTNRNVVVEEL.

T13 is a catalytic residue. Positions 168, 171, and 174 each coordinate Na(+).

Belongs to the peptidase T1B family. HslV subfamily. As to quaternary structure, a double ring-shaped homohexamer of HslV is capped on each side by a ring-shaped HslU homohexamer. The assembly of the HslU/HslV complex is dependent on binding of ATP.

It localises to the cytoplasm. The enzyme catalyses ATP-dependent cleavage of peptide bonds with broad specificity.. Allosterically activated by HslU binding. Functionally, protease subunit of a proteasome-like degradation complex believed to be a general protein degrading machinery. In Xanthomonas oryzae pv. oryzae (strain MAFF 311018), this protein is ATP-dependent protease subunit HslV.